Reading from the N-terminus, the 357-residue chain is Dynein axonemal assembly factor 10 (357 aa).

WD repeat units follow at residues 80–127, 132–170, 184–223, and 277–321; these read EFTN…IPIW, AHQG…NSAN, EQTN…IQST, and EPNQ…IDKV.

Interacts with PIH1D1; the interaction associates DNAAF10 with the R2TP complex. Interacts with several dynein axonemal assembly factors.

The protein resides in the dynein axonemal particle. Functionally, key assembly factor specifically required for the stability of axonemal dynein heavy chains in cytoplasm. This chain is Dynein axonemal assembly factor 10 (dnaaf10), found in Dictyostelium discoideum (Social amoeba).